Consider the following 301-residue polypeptide: Heme A synthase (301 aa).

The Cytoplasmic segment spans residues 1-5; the sequence is MHKKL. Residues 6 to 26 traverse the membrane as a helical segment; that stretch reads AFFSGFVTLGMMLVLIMGGTV. Residues 27–62 lie on the Extracellular side of the membrane; that stretch reads TKTDSGDGCGTDWPLCHGKLIPTNPSVETMIEYSHR. Cysteine 35 and cysteine 42 are oxidised to a cystine. Glutamate 58 is an active-site residue. Residue histidine 61 coordinates heme o. The chain crosses the membrane as a helical span at residues 63–83; the sequence is VVSGIEGLLIIALAIWTFIAV. Topologically, residues 84-90 are cytoplasmic; that stretch reads KHRVDVK. Residues 91-111 form a helical membrane-spanning segment; that stretch reads IFAFLAFIFMLIQSIIGAGAV. The Extracellular portion of the chain corresponds to 112–121; sequence IWQQSDAILA. A helical membrane pass occupies residues 122-142; it reads LHFGISLVSFASLLILTILLF. Position 123 (histidine 123) interacts with heme o. Topologically, residues 143 to 158 are cytoplasmic; that stretch reads EGDREHQVVSRRLRSH. The helical transmembrane segment at 159 to 179 threads the bilayer; that stretch reads LYGLSIYTMIVVYTGAYVRHL. Residues 180-203 lie on the Extracellular side of the membrane; sequence GATYACVGWPICEQEVWTFESYVQ. A disulfide bond links cysteine 185 and cysteine 191. A helical membrane pass occupies residues 204 to 224; that stretch reads MGHRVMAGLLVLYTLYVLYLA. Position 206 (histidine 206) interacts with heme b. The Cytoplasmic segment spans residues 225–234; that stretch reads RKEMNRLIER. The chain crosses the membrane as a helical span at residues 235-255; the sequence is GMMASLFFILLQVGTGAWIVL. Over 256–259 the chain is Extracellular; the sequence is GGHA. Residues 260–280 traverse the membrane as a helical segment; sequence TYVPLLHAFLITCYFGILSYL. Histidine 266 contacts heme b. At 281–301 the chain is on the cytoplasmic side; the sequence is SYHAYRSTARQDGAQLKNMNG.

This sequence belongs to the COX15/CtaA family. Type 1 subfamily. In terms of assembly, interacts with CtaB. The cofactor is heme b.

It is found in the cell membrane. It carries out the reaction Fe(II)-heme o + 2 A + H2O = Fe(II)-heme a + 2 AH2. It functions in the pathway porphyrin-containing compound metabolism; heme A biosynthesis; heme A from heme O: step 1/1. Catalyzes the conversion of heme O to heme A by two successive hydroxylations of the methyl group at C8. The first hydroxylation forms heme I, the second hydroxylation results in an unstable dihydroxymethyl group, which spontaneously dehydrates, resulting in the formyl group of heme A. This Exiguobacterium sp. (strain ATCC BAA-1283 / AT1b) protein is Heme A synthase.